The sequence spans 573 residues: MLO-like protein 11 (573 aa).

The Extracellular portion of the chain corresponds to 1-19 (MGEGEENGNEADSNERSLA). Residues 20-40 (LSPTWSVAIVLTVFVVVSLIV) form a helical membrane-spanning segment. Over 41 to 69 (ERSIYRLSTWLRKTKRKPMFAALEKMKEE) the chain is Cytoplasmic. Residues 70–90 (LMLLGFISLLLTATSSTIANI) traverse the membrane as a helical segment. The Extracellular portion of the chain corresponds to 91 to 163 (CVPSSFYNDR…SYEGLEQLHR (73 aa)). Residues 164 to 184 (FIFIMAVTHVTYSCLTMLLAI) form a helical membrane-spanning segment. Over 185-287 (VKIHSWRIWE…IRSMEEEFQR (103 aa)) the chain is Cytoplasmic. 2 helical membrane-spanning segments follow: residues 288–308 (IVGV…FNIK) and 309–329 (GSNL…LVGA). Residues 330–371 (KLQHVIATLALENAGLTEYPSGVKLRPRDELFWFNKPELLLS) are Cytoplasmic-facing. Residues 372 to 392 (LIHFILFQNSFELASFFWFWW) traverse the membrane as a helical segment. At 393–411 (QFGYSSCFLKNHYLVYFRL) the chain is on the extracellular side. Residues 412 to 432 (LLGFAGQFLCSYSTLPLYALV) traverse the membrane as a helical segment. At 433-573 (TQMGTNYKAA…SSSLPSEKRV (141 aa)) the chain is on the cytoplasmic side. The segment at 446-467 (QRIRETIRGWGKATRRKRRHGL) is calmodulin-binding. Disordered stretches follow at residues 500-532 (EQQR…TSSR) and 554-573 (RSEP…EKRV). A compositionally biased stretch (low complexity) spans 507–516 (EQGTTELELQ). Residues 561–573 (LSRSSSLPSEKRV) show a composition bias toward polar residues.

The protein belongs to the MLO family.

It is found in the membrane. In terms of biological role, may be involved in modulation of pathogen defense and leaf cell death. Activity seems to be regulated by Ca(2+)-dependent calmodulin binding and seems not to require heterotrimeric G proteins. The polypeptide is MLO-like protein 11 (MLO11) (Arabidopsis thaliana (Mouse-ear cress)).